We begin with the raw amino-acid sequence, 102 residues long: Small ribosomal subunit protein uS17 (102 aa).

Residues 1–15 are compositionally biased toward polar residues; the sequence is MTDETASQEASQSTD. Positions 1-20 are disordered; the sequence is MTDETASQEASQSTDAAAPA.

Belongs to the universal ribosomal protein uS17 family. In terms of assembly, part of the 30S ribosomal subunit.

Functionally, one of the primary rRNA binding proteins, it binds specifically to the 5'-end of 16S ribosomal RNA. The polypeptide is Small ribosomal subunit protein uS17 (Frankia casuarinae (strain DSM 45818 / CECT 9043 / HFP020203 / CcI3)).